The chain runs to 307 residues: Methionyl-tRNA formyltransferase (307 aa).

108-111 (SLLP) provides a ligand contact to (6S)-5,6,7,8-tetrahydrofolate.

The protein belongs to the Fmt family.

The catalysed reaction is L-methionyl-tRNA(fMet) + (6R)-10-formyltetrahydrofolate = N-formyl-L-methionyl-tRNA(fMet) + (6S)-5,6,7,8-tetrahydrofolate + H(+). Attaches a formyl group to the free amino group of methionyl-tRNA(fMet). The formyl group appears to play a dual role in the initiator identity of N-formylmethionyl-tRNA by promoting its recognition by IF2 and preventing the misappropriation of this tRNA by the elongation apparatus. The sequence is that of Methionyl-tRNA formyltransferase from Xanthomonas campestris pv. campestris (strain 8004).